The chain runs to 58 residues: Small ribosomal subunit protein bS21 (58 aa).

Residues 27-58 are disordered; the sequence is GVLSEARKHEHYEKPSVKRKKKSEAARKRKFK. Residues 31–42 are compositionally biased toward basic and acidic residues; it reads EARKHEHYEKPS. Over residues 43–58 the composition is skewed to basic residues; that stretch reads VKRKKKSEAARKRKFK.

It belongs to the bacterial ribosomal protein bS21 family.

This is Small ribosomal subunit protein bS21 from Desulfitobacterium hafniense (strain DSM 10664 / DCB-2).